Reading from the N-terminus, the 126-residue chain is Small ribosomal subunit protein uS13 (126 aa).

Residues 94–126 (GLPVRGQKTRNNAHTVKGKPKAAIAGKKKNKVN) form a disordered region. Over residues 109–126 (VKGKPKAAIAGKKKNKVN) the composition is skewed to basic residues.

This sequence belongs to the universal ribosomal protein uS13 family. As to quaternary structure, part of the 30S ribosomal subunit. Forms a loose heterodimer with protein S19. Forms two bridges to the 50S subunit in the 70S ribosome.

Functionally, located at the top of the head of the 30S subunit, it contacts several helices of the 16S rRNA. In the 70S ribosome it contacts the 23S rRNA (bridge B1a) and protein L5 of the 50S subunit (bridge B1b), connecting the 2 subunits; these bridges are implicated in subunit movement. Contacts the tRNAs in the A and P-sites. The sequence is that of Small ribosomal subunit protein uS13 from Aster yellows witches'-broom phytoplasma (strain AYWB).